The sequence spans 192 residues: Peptidyl-tRNA hydrolase (192 aa).

Tyr17 contacts tRNA. Residue His22 is the Proton acceptor of the active site. The tRNA site is built by Phe68, Asn70, and Asn116.

It belongs to the PTH family. In terms of assembly, monomer.

Its subcellular location is the cytoplasm. It catalyses the reaction an N-acyl-L-alpha-aminoacyl-tRNA + H2O = an N-acyl-L-amino acid + a tRNA + H(+). Functionally, hydrolyzes ribosome-free peptidyl-tRNAs (with 1 or more amino acids incorporated), which drop off the ribosome during protein synthesis, or as a result of ribosome stalling. Catalyzes the release of premature peptidyl moieties from peptidyl-tRNA molecules trapped in stalled 50S ribosomal subunits, and thus maintains levels of free tRNAs and 50S ribosomes. This chain is Peptidyl-tRNA hydrolase, found in Xylella fastidiosa (strain Temecula1 / ATCC 700964).